The primary structure comprises 426 residues: Enolase (426 aa).

A disordered region spans residues proline 38–glycine 60. Residues glutamate 47–arginine 58 show a composition bias toward basic and acidic residues. A (2R)-2-phosphoglycerate-binding site is contributed by glutamine 163. The Proton donor role is filled by glutamate 205. Mg(2+) contacts are provided by aspartate 242, glutamate 285, and aspartate 312. (2R)-2-phosphoglycerate contacts are provided by lysine 337, arginine 366, serine 367, and lysine 388. Lysine 337 acts as the Proton acceptor in catalysis.

Belongs to the enolase family. Requires Mg(2+) as cofactor.

It localises to the cytoplasm. Its subcellular location is the secreted. It is found in the cell surface. The catalysed reaction is (2R)-2-phosphoglycerate = phosphoenolpyruvate + H2O. Its pathway is carbohydrate degradation; glycolysis; pyruvate from D-glyceraldehyde 3-phosphate: step 4/5. In terms of biological role, catalyzes the reversible conversion of 2-phosphoglycerate (2-PG) into phosphoenolpyruvate (PEP). It is essential for the degradation of carbohydrates via glycolysis. The sequence is that of Enolase from Caulobacter sp. (strain K31).